Reading from the N-terminus, the 294-residue chain is MKIAAFDIGGTALKMGVVLPHGEIILTKSAEISGSDGDQILAEMKVFLAENTDVTGIAVSAPGYVNPKTGLITMGGAIRRFDNFNLKEWLEAETGLPVAIENDANCALLAEKWLGKGQDLDDFLCLTIGTGIGGGIFSNGELVRGGRFRAGEFGYMFSERPGAFRPGKYTLNETTTMLVLRRQYAELTGRPLEEITGEEIFANYDAHDAVSERLITEFYTGICTGLYNLIYLFDPTHIFIGGGITSRPTFIAELKHHMESFGLRDTIIETATHKNQAGLLGAVYHFLQEENRHE.

An ATP-binding site is contributed by 5–11 (AFDIGGT).

The protein belongs to the ROK (NagC/XylR) family.

It catalyses the reaction D-cellobiose + ATP = 6-phospho-beta-D-glucosyl-(1-&gt;4)-D-glucose + ADP + H(+). In terms of biological role, catalyzes the ATP-dependent phosphorylation of cellobiose to produce cellobiose-6'-P. May have a dual role of kinase and transcriptional regulator of the cellobiose-PTS operon. The protein is Beta-glucoside kinase (bglK) of Listeria monocytogenes serovar 1/2a (strain ATCC BAA-679 / EGD-e).